Reading from the N-terminus, the 946-residue chain is MADEGGLETGAHDELKGTEEQAVNFAPSPDFLWLCEQLFAKIDHVQFERANNLLTKPVTARYYEVISNFTTLWRTTVGNNIYPALRLILPYRDRRVFNIKDYTLIKAICAFLKLPKDSSTEKKLINWKQDAGRSVRLSKFCVEEIKKRRSEPQIDRNERITIDDLNGYLDQLAIERTEQGRSFKNLANSDIMNKCLTSMTFLEMQYFFDILLKNRPLGGHEHKLLNCWHPDAQDYLSVVSDLETVAKRLWDPSQRLGNQDLKINIGLAFAPQLATKLHVSYQKIGEKLGWDFFIEEKMDGERIQMHYTNFGSDIKFYSRRATDYTYLYGNNLKTGTLANFINLNKNVKDCVLDCEVVTFDSNNKIVLPFGMVKSSAKNMLSQDGIDTQGFHPLLMVFDVLYLNGATLVDLPYYKRREYLKQILTPTAHRIEIIKSIRANDEQMIKKSLEKALSVGSEGIILKRYDSRYVIASRSDDWIKIKPEYLEQFGENMDLVLMGRDPSKKDSLMLGLLDYEEVIQDSPIMVNSQSSEENSQRFRGFVSLCIIANGISNEEYKEIDRKTKGLWNDSEKIPPLEYMKFGSKVPRQWIDPKKSLILEIKARSLDNTRSSERKFAAGCTLFGGYCRQIREDKNWKTCYTLQEFERAKSGNNWRKRGSSKPQKVISKKRRYNIISSVNKALEDFAELEHRSDIFDGMYFYVLSDYFDGVKRKRIKKSEIQKVIVANGGQLVQNVITRNYNLNDLRIISSRNTVECNSLIVRGYDIISPKWVFDCLLSGKIMKLEPSHCFNFSKQLMDYAYKRIDQYGDPYERDINKYEWSSLTSEKICTTAKQQPDVQFDNSLMDVPHFLFHGRIVFLLSDNNNIQKESFMVDAYGGKVTNELSSANLVIVVGAVTQRRINDIRKQISSEVIKQDHPPRIPDMVSEGWLYDCIKQNTQVAEDNYRLP.

ATP contacts are provided by E295, K297, R302, E355, F397, E457, K462, K479, and K481. K297 acts as the N6-AMP-lysine intermediate in catalysis. E355 contacts Mg(2+). A Mg(2+)-binding site is contributed by E457. 2 consecutive BRCT domains span residues 688 to 787 (HRSD…PSHC) and 845 to 945 (VPHF…NYRL).

This sequence belongs to the ATP-dependent DNA ligase family. Requires Mg(2+) as cofactor.

It is found in the nucleus. The catalysed reaction is ATP + (deoxyribonucleotide)n-3'-hydroxyl + 5'-phospho-(deoxyribonucleotide)m = (deoxyribonucleotide)n+m + AMP + diphosphate.. Its function is as follows. DNA ligase involved in DNA non-homologous end joining (NHEJ); required for double-strand break (DSB) repair. The chain is DNA ligase 4 (LIG4) from Candida glabrata (strain ATCC 2001 / BCRC 20586 / JCM 3761 / NBRC 0622 / NRRL Y-65 / CBS 138) (Yeast).